The chain runs to 93 residues: Small ribosomal subunit protein uS19 (93 aa).

It belongs to the universal ribosomal protein uS19 family.

Protein S19 forms a complex with S13 that binds strongly to the 16S ribosomal RNA. This Paenarthrobacter aurescens (strain TC1) protein is Small ribosomal subunit protein uS19.